Reading from the N-terminus, the 705-residue chain is Kinesin-like protein KIF2A (705 aa).

A disordered region spans residues D65–Q185. S75 is modified (phosphoserine). Phosphothreonine is present on T96. S99 is subject to Phosphoserine. K101 carries the post-translational modification N6-acetyllysine. A compositionally biased stretch (polar residues) spans L122–S139. A phosphoserine mark is found at S134 and S139. A coiled-coil region spans residues R153–D186. Residues C158 to Q185 show a composition bias toward basic and acidic residues. Residues R222–L552 form the Kinesin motor domain. Residue G312–T319 participates in ATP binding. Phosphoserine is present on Q572. The stretch at A659 to N698 forms a coiled coil.

Belongs to the TRAFAC class myosin-kinesin ATPase superfamily. Kinesin family. MCAK/KIF2 subfamily. As to quaternary structure, interacts with AURKA and PLK1. Interacts with PSRC1. Interacts with MCRS1; the interaction enhances recruitment of KIF2A to the minus ends of spindle microtubules which promotes chromosome alignment.

The protein localises to the cytoplasm. Its subcellular location is the cytoskeleton. It localises to the microtubule organizing center. The protein resides in the centrosome. It is found in the spindle pole. The protein localises to the spindle. Plus end-directed microtubule-dependent motor required for normal brain development. May regulate microtubule dynamics during axonal growth. Required for normal progression through mitosis. Required for normal congress of chromosomes at the metaphase plate. Required for normal spindle dynamics during mitosis. Promotes spindle turnover. Implicated in formation of bipolar mitotic spindles. Has microtubule depolymerization activity. The polypeptide is Kinesin-like protein KIF2A (Rattus norvegicus (Rat)).